An 880-amino-acid chain; its full sequence is MPRQRAPKEEEAELLTKQERSARSSEDASDTSISSISTTSLVLEHINDPAINGTSRSRRGEKYTDEDDEAQEAFDVEGGRYKSPISVDKKTRRWLWIVGIACVTGWALALVFFLMSGSYKHVSTRPHDPLASSTKGSGKKITMDDVFGGRFYAREQSLKWIAGPNGEDGLLLERDAGNAEYLVVEDIRNKGDGDSSAKKTKLMQKSGFNVNGYFVRPVEVWPSKDFKKTGEPLDPENQDGRVQLASLSPQSDAVVFTRNNNMYLRKLDSKEVIQITRDGGSELFYGIPDWVYEEEVFQTNSATWWSEDGKYIAFLRTDESTVPTYPVQYFVSRPSGDKPKAGEENYPEVRNIKYPKAGAPNPIVTLQFYDVEKAEVFSVEIEDDFRDNNRLITEIVWAGKTKQVLVRETNRESDILKVVLMDVEKRTGKTVRTENVAELDGGWFEVSQKTTFVPADPANGRKDDGYIDTIIHEGYDHIGYFTPLDNDKPIVLSQGEWEVVDAPSRVDLKNNIVYYISTAKSSMERHAYSVFLNGTGTSEVVENSGSGYYGASFSAGGSYALITYQGPGIPWQKIISTPSSKDKFEKVLEENKALDRFVREREMPILNYQTIEVDGFKLNVLERRPPHFNEKKKYPVLFYQYSGPGSQEVNKKFHVDFQAYIAANLEYIVVTVDGRGTGFLGRKLRCITRGNIGYYEAHDQIAAAKIWASKKYVDADRLAIWGWSYGGFNTLKTLEQDAGQTFKYGMAVAPVTDWRYYDSIYTERYMHTPQNNAAGYNNSTITDVASLAKNTRFLLMHGVADDNVHMQNTLTLLDRLDLAGVENYDVHVFPDSDHSIYFHNANRIVYDKLRWWLINAFNGEWAKIKTAEPKAQVDARMERR.

The span at 1-26 (MPRQRAPKEEEAELLTKQERSARSSE) shows a compositional bias: basic and acidic residues. A disordered region spans residues 1-71 (MPRQRAPKEE…KYTDEDDEAQ (71 aa)). Over 1 to 93 (MPRQRAPKEE…PISVDKKTRR (93 aa)) the chain is Cytoplasmic. The span at 30-40 (DTSISSISTTS) shows a compositional bias: low complexity. A helical; Signal-anchor for type II membrane protein transmembrane segment spans residues 94–114 (WLWIVGIACVTGWALALVFFL). Residues 115–880 (MSGSYKHVST…AQVDARMERR (766 aa)) lie on the Vacuolar side of the membrane. N-linked (GlcNAc...) asparagine glycosylation occurs at asparagine 533. Residue serine 724 is the Charge relay system of the active site. N-linked (GlcNAc...) asparagine glycosylation is present at asparagine 778. Active-site charge relay system residues include aspartate 801 and histidine 834.

It belongs to the peptidase S9B family.

It localises to the vacuole membrane. It carries out the reaction Release of an N-terminal dipeptide, Xaa-Yaa-|-Zaa-, from a polypeptide, preferentially when Yaa is Pro, provided Zaa is neither Pro nor hydroxyproline.. Functionally, type IV dipeptidyl-peptidase which removes N-terminal dipeptides sequentially from polypeptides having unsubstituted N-termini provided that the penultimate residue is proline. In Pyrenophora tritici-repentis (strain Pt-1C-BFP) (Wheat tan spot fungus), this protein is Probable dipeptidyl-aminopeptidase B (dapB).